Consider the following 795-residue polypeptide: Mitochondrial inner membrane m-AAA protease component paraplegin (795 aa).

The N-terminal 43 residues, 1–43 (MAVLLLLLRALRRGPGPGPRPLWGPGPAWSPGFPARPGRGRPY), are a transit peptide targeting the mitochondrion. Positions 44-105 (MASRPPGDLA…GGTFYFNTSR (62 aa)) are cleaved as a propeptide — removed in mature form. Residues 106-144 (LKQKNKEKDKSKGKAPEEDEEERRRRERDDQMYRERLRT) are Mitochondrial matrix-facing. A disordered region spans residues 108 to 133 (QKNKEKDKSKGKAPEEDEEERRRRER). A compositionally biased stretch (basic and acidic residues) spans 109-133 (KNKEKDKSKGKAPEEDEEERRRRER). A helical membrane pass occupies residues 145 to 165 (LLVIAVVMSLLNALSTSGGSI). Over 166–248 (SWNDFVHEML…DRIPVSYKRT (83 aa)) the chain is Mitochondrial intermembrane. A helical membrane pass occupies residues 249 to 269 (GFFGNALYSVGMTAVGLAILW). Residues 270-795 (YVFRLAGMTG…LGGEEPTWPK (526 aa)) are Mitochondrial matrix-facing. The ATP site is built by alanine 312, glycine 352, cysteine 353, glycine 354, lysine 355, threonine 356, and leucine 357. Tyrosine 505 is subject to 3'-nitrotyrosine. Position 574 (histidine 574) interacts with Zn(2+). Glutamate 575 is an active-site residue. Residues histidine 578 and aspartate 650 each coordinate Zn(2+). Positions 701–795 (HEARLLVAKA…LGGEEPTWPK (95 aa)) are interaction with PPIF. Positions 751–795 (PHGPKKMIAPQRWIDAQREKQDLGEEETEETQQPPLGGEEPTWPK) are disordered.

It in the N-terminal section; belongs to the AAA ATPase family. The protein in the C-terminal section; belongs to the peptidase M41 family. As to quaternary structure, forms heterooligomers with AFG3L2; the m-AAA protease is composed of heterohexamers of AFG3L2 and SPG7. Component of the mitochondrial permeability transition pore complex (mPTPC), at least composed of SPG7, VDAC1 and PPIF. Interacts with MAIP1. Zn(2+) serves as cofactor. Upon import into the mitochondrion, the N-terminal transit peptide is cleaved by the mitochondrial-processing peptidase (MPP) to generate an intermediate form which undergoes a second proteolytic cleavage mediated by proteases AFG3L2 removing an additional N-terminal fragment to generate the proteolytically active mature form. Ubiquitous.

It is found in the mitochondrion inner membrane. The catalysed reaction is ATP + H2O = ADP + phosphate + H(+). Its function is as follows. Catalytic component of the m-AAA protease, a protease that plays a key role in proteostasis of inner mitochondrial membrane proteins, and which is essential for axonal and neuron development. SPG7 possesses both ATPase and protease activities: the ATPase activity is required to unfold substrates, threading them into the internal proteolytic cavity for hydrolysis into small peptide fragments. The m-AAA protease exerts a dual role in the mitochondrial inner membrane: it mediates the processing of specific regulatory proteins and ensures protein quality control by degrading misfolded polypeptides. Mediates protein maturation of the mitochondrial ribosomal subunit MRPL32/bL32m by catalyzing the cleavage of the presequence of MRPL32/bL32m prior to assembly into the mitochondrial ribosome. Acts as a regulator of calcium in neurons by mediating degradation of SMDT1/EMRE before its assembly with the uniporter complex, limiting the availability of SMDT1/EMRE for MCU assembly and promoting efficient assembly of gatekeeper subunits with MCU. Also regulates mitochondrial calcium by catalyzing degradation of MCU. Plays a role in the formation and regulation of the mitochondrial permeability transition pore (mPTP) and its proteolytic activity is dispensable for this function. The polypeptide is Mitochondrial inner membrane m-AAA protease component paraplegin (Homo sapiens (Human)).